A 759-amino-acid polypeptide reads, in one-letter code: Putative ATP-dependent DNA helicase YjcD (759 aa).

The disordered stretch occupies residues 68-121 (ACEPKPSKEGKKEDDQESGVIRLPKGKAIAADPSPAVTEWHRPRSIKPGTPFVP). The segment covering 69 to 81 (CEPKPSKEGKKED) has biased composition (basic and acidic residues). The 280-residue stretch at 134–413 (VGLNTDQLKA…IYLTANYRST (280 aa)) folds into the UvrD-like helicase ATP-binding domain. ATP-binding positions include 158–163 (GSGKTR) and Arg411. The region spanning 414 to 676 (HPIVSSADIV…QLMTIHRSKG (263 aa)) is the UvrD-like helicase C-terminal domain.

Belongs to the helicase family. UvrD subfamily.

The protein resides in the cytoplasm. The enzyme catalyses Couples ATP hydrolysis with the unwinding of duplex DNA by translocating in the 3'-5' direction.. The catalysed reaction is ATP + H2O = ADP + phosphate + H(+). May be involved in the generation of recombinogenic substrates for the subsequent action of RecA. The protein is Putative ATP-dependent DNA helicase YjcD (yjcD) of Bacillus subtilis (strain 168).